The following is a 459-amino-acid chain: MDDTIIALATAVGEGSIHVLRLSGPQAQEIIERAFTPHHPQRWQEKSNFTLHLGYFRAGAKVLDEVLIGRMSAPGSYTGEDVYEINCHGGLYIAERIMRECIGLGARLAEAGEFTKRAFLNGKLDLIQAEAIVDLIAAKTDSSADLALAQMEGLLSQKILLLKDQVMETLAFIEAGIDFPEDDVESLDRDALLQRISKGLELARDLLDGSKTGRILREGMLTVIVGQPNVGKSSLLNALMGEERAIVTDIPGTTRDEIRESVTIGGILLQLVDTAGLRESEDLVEKLGIERSWKAMEKAELILLIIQAGQELKAEELKILSQYDQSVIVLINKMDLLAGKERGEEVLENYPTQQGVWIPFSVKENLGFKQLEKEIKQRVYQGKAEKTKEPLLSNIRQITALERAVSALANGWDSVKNGLPWDMVSIDIRQALQEISQMTGDSVQESLLDDIFSRFCIGK.

(6S)-5-formyl-5,6,7,8-tetrahydrofolate contacts are provided by Arg21, Glu84, and Lys123. One can recognise a TrmE-type G domain in the interval 219-380 (GMLTVIVGQP…LEKEIKQRVY (162 aa)). A K(+)-binding site is contributed by Asn229. GTP contacts are provided by residues 229 to 234 (NVGKSS), 248 to 254 (TDIPGTT), and 273 to 276 (DTAG). Ser233 provides a ligand contact to Mg(2+). Thr248, Ile250, and Thr253 together coordinate K(+). Position 254 (Thr254) interacts with Mg(2+). Residue Lys459 coordinates (6S)-5-formyl-5,6,7,8-tetrahydrofolate.

Belongs to the TRAFAC class TrmE-Era-EngA-EngB-Septin-like GTPase superfamily. TrmE GTPase family. As to quaternary structure, homodimer. Heterotetramer of two MnmE and two MnmG subunits. Requires K(+) as cofactor.

It localises to the cytoplasm. In terms of biological role, exhibits a very high intrinsic GTPase hydrolysis rate. Involved in the addition of a carboxymethylaminomethyl (cmnm) group at the wobble position (U34) of certain tRNAs, forming tRNA-cmnm(5)s(2)U34. This Desulfitobacterium hafniense (strain Y51) protein is tRNA modification GTPase MnmE.